A 539-amino-acid polypeptide reads, in one-letter code: Glucose-6-phosphate isomerase (539 aa).

The active-site Proton donor is the Glu340. Catalysis depends on residues His371 and Lys500.

Belongs to the GPI family.

Its subcellular location is the cytoplasm. It carries out the reaction alpha-D-glucose 6-phosphate = beta-D-fructose 6-phosphate. It participates in carbohydrate biosynthesis; gluconeogenesis. Its pathway is carbohydrate degradation; glycolysis; D-glyceraldehyde 3-phosphate and glycerone phosphate from D-glucose: step 2/4. Functionally, catalyzes the reversible isomerization of glucose-6-phosphate to fructose-6-phosphate. This is Glucose-6-phosphate isomerase from Ruegeria pomeroyi (strain ATCC 700808 / DSM 15171 / DSS-3) (Silicibacter pomeroyi).